A 120-amino-acid polypeptide reads, in one-letter code: MFLLHEYDIFWAFLIISSVIPILAFLISGVLAPISKGPEKLSSYESGIEPMGDAWLQFRIRYYMFALVFVVFDVETVFLYPWAMSFDVLGVSVFIEALIFVLILIVGSVYAWRKGALEWS.

A run of 3 helical transmembrane segments spans residues 9–29, 64–84, and 88–108; these read IFWAFLIISSVIPILAFLISG, MFALVFVVFDVETVFLYPWAM, and VLGVSVFIEALIFVLILIVGS.

It belongs to the complex I subunit 3 family. As to quaternary structure, NDH is composed of at least 16 different subunits, 5 of which are encoded in the nucleus.

It is found in the plastid. The protein localises to the chloroplast thylakoid membrane. The catalysed reaction is a plastoquinone + NADH + (n+1) H(+)(in) = a plastoquinol + NAD(+) + n H(+)(out). The enzyme catalyses a plastoquinone + NADPH + (n+1) H(+)(in) = a plastoquinol + NADP(+) + n H(+)(out). In terms of biological role, NDH shuttles electrons from NAD(P)H:plastoquinone, via FMN and iron-sulfur (Fe-S) centers, to quinones in the photosynthetic chain and possibly in a chloroplast respiratory chain. The immediate electron acceptor for the enzyme in this species is believed to be plastoquinone. Couples the redox reaction to proton translocation, and thus conserves the redox energy in a proton gradient. This chain is NAD(P)H-quinone oxidoreductase subunit 3, chloroplastic, found in Buxus microphylla (Littleleaf boxwood).